The sequence spans 305 residues: ATP synthase gamma chain (305 aa).

Belongs to the ATPase gamma chain family. F-type ATPases have 2 components, CF(1) - the catalytic core - and CF(0) - the membrane proton channel. CF(1) has five subunits: alpha(3), beta(3), gamma(1), delta(1), epsilon(1). CF(0) has three main subunits: a, b and c.

It is found in the cell membrane. Produces ATP from ADP in the presence of a proton gradient across the membrane. The gamma chain is believed to be important in regulating ATPase activity and the flow of protons through the CF(0) complex. The chain is ATP synthase gamma chain from Streptomyces griseus subsp. griseus (strain JCM 4626 / CBS 651.72 / NBRC 13350 / KCC S-0626 / ISP 5235).